A 218-amino-acid polypeptide reads, in one-letter code: Superoxide dismutase [Mn] 2, mitochondrial (218 aa).

The N-terminal 24 residues, 1–24 (MLQSTARTASKLVQPVAGVLAVRS), are a transit peptide targeting the mitochondrion. Mn(2+)-binding residues include His-50, His-98, Asp-179, and His-183.

The protein belongs to the iron/manganese superoxide dismutase family. As to quaternary structure, homotetramer. Requires Mn(2+) as cofactor. Expressed in pharynx and rectum. Upon thermal stress, expressed in vulva, body wall muscles and hypodermis.

The protein resides in the mitochondrion. It catalyses the reaction 2 superoxide + 2 H(+) = H2O2 + O2. Functionally, destroys superoxide anion radicals which are normally produced within the cells and which are toxic to biological systems. This chain is Superoxide dismutase [Mn] 2, mitochondrial (sod-3), found in Caenorhabditis elegans.